A 421-amino-acid chain; its full sequence is NAD-specific glutamate dehydrogenase (421 aa).

Residues K70 and K94 each coordinate substrate. The active-site Proton donor is the K106. Residues T191 and N222 each coordinate NAD(+). S355 contacts substrate.

It belongs to the Glu/Leu/Phe/Val dehydrogenases family. Homohexamer.

It catalyses the reaction L-glutamate + NAD(+) + H2O = 2-oxoglutarate + NH4(+) + NADH + H(+). It functions in the pathway amino-acid degradation; L-glutamate degradation via hydroxyglutarate pathway; crotonoyl-CoA from L-glutamate: step 1/5. The sequence is that of NAD-specific glutamate dehydrogenase from Peptoniphilus asaccharolyticus (Peptostreptococcus asaccharolyticus).